We begin with the raw amino-acid sequence, 499 residues long: ATP synthase subunit alpha (499 aa).

169–176 (GDRGTGKT) contributes to the ATP binding site.

This sequence belongs to the ATPase alpha/beta chains family. F-type ATPases have 2 components, CF(1) - the catalytic core - and CF(0) - the membrane proton channel. CF(1) has five subunits: alpha(3), beta(3), gamma(1), delta(1), epsilon(1). CF(0) has three main subunits: a(1), b(2) and c(9-12). The alpha and beta chains form an alternating ring which encloses part of the gamma chain. CF(1) is attached to CF(0) by a central stalk formed by the gamma and epsilon chains, while a peripheral stalk is formed by the delta and b chains.

The protein localises to the cell inner membrane. The catalysed reaction is ATP + H2O + 4 H(+)(in) = ADP + phosphate + 5 H(+)(out). Functionally, produces ATP from ADP in the presence of a proton gradient across the membrane. The alpha chain is a regulatory subunit. This Brachyspira hyodysenteriae (strain ATCC 49526 / WA1) protein is ATP synthase subunit alpha.